The primary structure comprises 128 residues: uncharacterized protein (128 aa).

This sequence to M.jannaschii MJ0766.

This is an uncharacterized protein from Methanocaldococcus jannaschii (strain ATCC 43067 / DSM 2661 / JAL-1 / JCM 10045 / NBRC 100440) (Methanococcus jannaschii).